Here is a 207-residue protein sequence, read N- to C-terminus: Cytidylate kinase (207 aa).

7-15 serves as a coordination point for ATP; that stretch reads GVAASGKSS.

It belongs to the cytidylate kinase family. Type 1 subfamily.

The protein localises to the cytoplasm. The enzyme catalyses CMP + ATP = CDP + ADP. The catalysed reaction is dCMP + ATP = dCDP + ADP. In Deinococcus deserti (strain DSM 17065 / CIP 109153 / LMG 22923 / VCD115), this protein is Cytidylate kinase.